The primary structure comprises 343 residues: Retroviral-like aspartic protease 1 (343 aa).

Topologically, residues 1-55 (MGSPGASLGIKKALQSEQATALPASAPAVSQPTAPAPSCLPKAGQVIPTLLREAP) are cytoplasmic. Residues 1–190 (MGSPGASLGI…HLPKEIVFAN (190 aa)) constitute a propeptide that is removed on maturation. A helical transmembrane segment spans residues 56-76 (FSSVIAPTLLCGFLFLAWVAA). Topologically, residues 77 to 343 (EVPEESSRMA…SEEGRQELSH (267 aa)) are extracellular. A Peptidase A2 domain is found at 207–288 (VRFLVDSGAQ…AEEAIIGTDV (82 aa)). Residue Asp212 is part of the active site. The N-linked (GlcNAc...) asparagine glycan is linked to Asn276. A propeptide spanning residues 327-343 (LIEEDPSSEEGRQELSH) is cleaved from the precursor.

Homodimer. In terms of processing, undergoes autocleavage which is necessary for activation of the protein. In terms of tissue distribution, expressed primarily in the granular layer of the epidermis and inner root sheath of hair follicles. In psoriatic skin, expressed throughout the stratum corneum. In ulcerated skin, expressed in the stratum granulosum of intact epidermis but almost absent from ulcerated regions. Expressed in differentiated areas of squamous cell carcinomas but not in undifferentiated tumors.

Its subcellular location is the membrane. In terms of biological role, protease responsible for filaggrin processing, essential for the maintenance of a proper epidermis organization. The polypeptide is Retroviral-like aspartic protease 1 (Homo sapiens (Human)).